We begin with the raw amino-acid sequence, 282 residues long: Bis(5'-nucleosyl)-tetraphosphatase, symmetrical (282 aa).

Belongs to the Ap4A hydrolase family.

The catalysed reaction is P(1),P(4)-bis(5'-adenosyl) tetraphosphate + H2O = 2 ADP + 2 H(+). Its function is as follows. Hydrolyzes diadenosine 5',5'''-P1,P4-tetraphosphate to yield ADP. The protein is Bis(5'-nucleosyl)-tetraphosphatase, symmetrical of Burkholderia pseudomallei (strain 668).